A 252-amino-acid chain; its full sequence is 2-succinyl-6-hydroxy-2,4-cyclohexadiene-1-carboxylate synthase (252 aa).

Belongs to the AB hydrolase superfamily. MenH family. Monomer.

It catalyses the reaction 5-enolpyruvoyl-6-hydroxy-2-succinyl-cyclohex-3-ene-1-carboxylate = (1R,6R)-6-hydroxy-2-succinyl-cyclohexa-2,4-diene-1-carboxylate + pyruvate. Its pathway is quinol/quinone metabolism; 1,4-dihydroxy-2-naphthoate biosynthesis; 1,4-dihydroxy-2-naphthoate from chorismate: step 3/7. It functions in the pathway quinol/quinone metabolism; menaquinone biosynthesis. Functionally, catalyzes a proton abstraction reaction that results in 2,5-elimination of pyruvate from 2-succinyl-5-enolpyruvyl-6-hydroxy-3-cyclohexene-1-carboxylate (SEPHCHC) and the formation of 2-succinyl-6-hydroxy-2,4-cyclohexadiene-1-carboxylate (SHCHC). This is 2-succinyl-6-hydroxy-2,4-cyclohexadiene-1-carboxylate synthase from Escherichia coli (strain K12 / MC4100 / BW2952).